The primary structure comprises 142 residues: Hemoglobin subunit alpha (142 aa).

The 141-residue stretch at 2 to 142 folds into the Globin domain; that stretch reads VLSPADKTNV…VSTVLVSKYR (141 aa). Phosphoserine is present on S4. K8 bears the N6-succinyllysine mark. Position 9 is a phosphothreonine (T9). K12 bears the N6-succinyllysine mark. An N6-acetyllysine; alternate modification is found at K17. K17 is modified (N6-succinyllysine; alternate). Phosphotyrosine is present on Y25. At S36 the chain carries Phosphoserine. The residue at position 41 (K41) is an N6-succinyllysine. A Phosphoserine modification is found at S50. H59 is an O2 binding site. H88 is a binding site for heme b. S103 bears the Phosphoserine mark. T109 bears the Phosphothreonine mark. Phosphoserine is present on residues S125 and S132. At T135 the chain carries Phosphothreonine. S139 is subject to Phosphoserine.

This sequence belongs to the globin family. Heterotetramer of two alpha chains and two beta chains. Red blood cells.

Functionally, involved in oxygen transport from the lung to the various peripheral tissues. In terms of biological role, hemopressin acts as an antagonist peptide of the cannabinoid receptor CNR1. Hemopressin-binding efficiently blocks cannabinoid receptor CNR1 and subsequent signaling. This chain is Hemoglobin subunit alpha (HBA), found in Antrozous pallidus (Pallid bat).